The primary structure comprises 203 residues: Large ribosomal subunit protein uL22 (203 aa).

2 stretches are compositionally biased toward polar residues: residues 116–126 and 134–167; these read QNGGESQNQEY and VSKS…DSQL. Positions 116 to 203 are disordered; the sequence is QNGGESQNQE…TVLAQEKEVK (88 aa). Positions 168-194 are enriched in low complexity; the sequence is SAKTNSTTTAKKTDLADNNTKNDATNT.

It belongs to the universal ribosomal protein uL22 family. As to quaternary structure, part of the 50S ribosomal subunit.

In terms of biological role, this protein binds specifically to 23S rRNA; its binding is stimulated by other ribosomal proteins, e.g. L4, L17, and L20. It is important during the early stages of 50S assembly. It makes multiple contacts with different domains of the 23S rRNA in the assembled 50S subunit and ribosome. Its function is as follows. The globular domain of the protein is located near the polypeptide exit tunnel on the outside of the subunit, while an extended beta-hairpin is found that lines the wall of the exit tunnel in the center of the 70S ribosome. This chain is Large ribosomal subunit protein uL22, found in Mesomycoplasma hyopneumoniae (strain 232) (Mycoplasma hyopneumoniae).